A 133-amino-acid polypeptide reads, in one-letter code: Fluoride-specific ion channel FluC (133 aa).

4 helical membrane-spanning segments follow: residues 12–32 (LAMT…ASLI), 41–61 (WGTL…LVWL), 76–96 (IVGV…CLVF), and 104–124 (MIGI…VAGA). Na(+) contacts are provided by glycine 81 and threonine 84.

The protein belongs to the fluoride channel Fluc/FEX (TC 1.A.43) family.

The protein localises to the cell inner membrane. The catalysed reaction is fluoride(in) = fluoride(out). Its activity is regulated as follows. Na(+) is not transported, but it plays an essential structural role and its presence is essential for fluoride channel function. In terms of biological role, fluoride-specific ion channel. Important for reducing fluoride concentration in the cell, thus reducing its toxicity. This Xanthomonas euvesicatoria pv. vesicatoria (strain 85-10) (Xanthomonas campestris pv. vesicatoria) protein is Fluoride-specific ion channel FluC.